Reading from the N-terminus, the 168-residue chain is Ubiquitin-conjugating enzyme E2 7 (168 aa).

The interval 1-21 (MATAPARRASSSRSSSEISRT) is disordered. One can recognise a UBC core domain in the interval 6–166 (ARRASSSRSS…VRRAVRKSQE (161 aa)). Residue Cys-92 is the Glycyl thioester intermediate of the active site.

It belongs to the ubiquitin-conjugating enzyme family.

It catalyses the reaction S-ubiquitinyl-[E1 ubiquitin-activating enzyme]-L-cysteine + [E2 ubiquitin-conjugating enzyme]-L-cysteine = [E1 ubiquitin-activating enzyme]-L-cysteine + S-ubiquitinyl-[E2 ubiquitin-conjugating enzyme]-L-cysteine.. Its pathway is protein modification; protein ubiquitination. Functionally, catalyzes the covalent attachment of ubiquitin to other proteins so as to signal them for selective protein degradation. Involved in the formation of multiubiquitin chains. This is Ubiquitin-conjugating enzyme E2 7 (UBC7) from Triticum aestivum (Wheat).